The sequence spans 427 residues: Flotillin-1 (427 aa).

A phosphoserine mark is found at Ser-19, Ser-163, and Ser-385. Thr-387 is modified (phosphothreonine).

This sequence belongs to the band 7/mec-2 family. Flotillin subfamily. As to quaternary structure, heterooligomeric complex of flotillin-1 and flotillin-2 and caveolin-1 and caveolin-2. Interacts with ECPAS.

It localises to the cell membrane. The protein resides in the endosome. The protein localises to the membrane. It is found in the caveola. Its subcellular location is the melanosome. It localises to the membrane raft. Functionally, may act as a scaffolding protein within caveolar membranes, functionally participating in formation of caveolae or caveolae-like vesicles. This chain is Flotillin-1 (FLOT1), found in Pongo abelii (Sumatran orangutan).